The following is a 429-amino-acid chain: UPF0242 protein CT_616 (429 aa).

The protein belongs to the UPF0242 family.

This chain is UPF0242 protein CT_616, found in Chlamydia trachomatis serovar D (strain ATCC VR-885 / DSM 19411 / UW-3/Cx).